Reading from the N-terminus, the 148-residue chain is MNTRYVKSFFLLLFFLSFFGTMASLFYSEIMHFKPCVLCWYQRIFLYPIPIILLIGLLKKDLNSIFYVVFLSSIGLIIAFYHYIIQLTQSKSVVCEIGTNSCAKIEVEYLGFITLPLMSSVCFALIFGIGLKLIIKSKKLKQNQHVYN.

Residues 7-26 (KSFFLLLFFLSFFGTMASLF) form a helical membrane-spanning segment. Cys36 and Cys39 are joined by a disulfide. Helical transmembrane passes span 41–60 (YQRI…LLKK) and 67–84 (YVVF…YHYI). A disulfide bond links Cys95 and Cys102. Residues 111-135 (GFITLPLMSSVCFALIFGIGLKLII) form a helical membrane-spanning segment.

This sequence belongs to the DsbB family. BdbC subfamily.

It is found in the cell membrane. Important but not absolutely essential for the production of the lantibiotic sublancin 168, it may also be required for the stability of other secreted proteins. Not required for competence for DNA uptake. The chain is SPbeta prophage-derived disulfide bond formation protein B (bdbB) from Bacillus subtilis (strain 168).